The chain runs to 93 residues: Protamine-3 (93 aa).

The interval Met-1–Ser-93 is disordered. The segment covering Glu-37–Leu-57 has biased composition (acidic residues). A compositionally biased stretch (polar residues) spans Glu-81–Ser-93. At Ser-85 the chain carries Phosphoserine.

Belongs to the protamine P3 family.

The protein resides in the nucleus. Its subcellular location is the chromosome. Its function is as follows. Protamines substitute for histones in the chromatin of sperm during the haploid phase of spermatogenesis. They compact sperm DNA into a highly condensed, stable and inactive complex. The polypeptide is Protamine-3 (PRM3) (Bos taurus (Bovine)).